We begin with the raw amino-acid sequence, 753 residues long: MNWTLTNSSLDKDSITSNGNRFLIGNGYLGIRGTLEEYRKEYFPAINLAGIYDQVGEGWREPLNAPNALYTRIEVDEVEYQLPKIEPRYHELSLDYRHGILDRQTVWASNKGTIIVKSSRFASMKEKHLVVLNYSITADYDCEIIVYTGIDGSVWDIHGPHYDKVEFQKQLLRHNETEILNEKYLLESESKWNGHRLSIAAQTHENKDIVYVTEDIICNKEAKIELIESDKECLRKLTFHGKAKEEINFTKYITVFTSKDCVDYKEQSIKIVNHAKDTGYERLQEEHKNVWEQLWNISEVTIEGDDEANDALNYSLYHLHCIAPRHSKSLSIAARGLSGQTYKGAVFWDTEMFMLDFFLYTQPEVAKTLLRYRIDTLEGAKKKAKLYGYEGAFYAWESQEGGYDACSDYNVTDVFTKRPMRTYFKDKQVHISSAIVYGIRSYLNYTNDFSILAEGGAETILECAKFYYSLLEKKIGKEYYEIHDVIGPDEYHERVNNNAYTNRMAKLTFETAIDILDHEKNKDEEFYIKLLKQYEIKDLLDKLKDACNKLYIPKPKDNSDLIEQFDGFFELEDVSLEEVRSRLLHEKEYWGGAYGVASHTQVIKQADVVTMLVLFKEEYQREVLQQNLNYYEPRTEHGSSLSACMYSLLYCMCDQPQYAYPFFMKSALADWNGKGKEWAGLVYIGGTHPAAAGGAYMTAIKGFGGFQIENGVIKATPRLPKHWVRLKYRVLYQGAIYEIDASKEQVSISKIEM.

Position 348-349 (348-349 (WD)) interacts with substrate. E490 functions as the Proton donor in the catalytic mechanism. 604 to 605 (KQ) serves as a coordination point for substrate.

Belongs to the glycosyl hydrolase 65 family. In terms of assembly, homodimer.

Its subcellular location is the cytoplasm. It carries out the reaction nigerose + phosphate = beta-D-glucose 1-phosphate + D-glucose. Its activity is regulated as follows. Does not require divalent metal ions. Catalyzes the reversible phosphorolysis of nigerose. Also shows a weak activity on kojibiose. This Lachnoclostridium phytofermentans (strain ATCC 700394 / DSM 18823 / ISDg) (Clostridium phytofermentans) protein is Nigerose phosphorylase.